We begin with the raw amino-acid sequence, 292 residues long: ATP phosphoribosyltransferase (292 aa).

This sequence belongs to the ATP phosphoribosyltransferase family. Long subfamily. Requires Mg(2+) as cofactor.

The protein localises to the cytoplasm. It catalyses the reaction 1-(5-phospho-beta-D-ribosyl)-ATP + diphosphate = 5-phospho-alpha-D-ribose 1-diphosphate + ATP. The protein operates within amino-acid biosynthesis; L-histidine biosynthesis; L-histidine from 5-phospho-alpha-D-ribose 1-diphosphate: step 1/9. Its activity is regulated as follows. Feedback inhibited by histidine. In terms of biological role, catalyzes the condensation of ATP and 5-phosphoribose 1-diphosphate to form N'-(5'-phosphoribosyl)-ATP (PR-ATP). Has a crucial role in the pathway because the rate of histidine biosynthesis seems to be controlled primarily by regulation of HisG enzymatic activity. In Gemmatimonas aurantiaca (strain DSM 14586 / JCM 11422 / NBRC 100505 / T-27), this protein is ATP phosphoribosyltransferase.